A 154-amino-acid polypeptide reads, in one-letter code: Superoxide dismutase [Cu-Zn] (154 aa).

The Cu cation site is built by His47 and His64. Cys58 and Cys147 are oxidised to a cystine. Zn(2+) contacts are provided by His64, His72, His81, and Asp84. Cu cation is bound at residue His121. Arg144 provides a ligand contact to substrate.

It belongs to the Cu-Zn superoxide dismutase family. Homodimer. It depends on Cu cation as a cofactor. Requires Zn(2+) as cofactor.

The protein localises to the cytoplasm. The catalysed reaction is 2 superoxide + 2 H(+) = H2O2 + O2. In terms of biological role, destroys radicals which are normally produced within the cells and which are toxic to biological systems. The sequence is that of Superoxide dismutase [Cu-Zn] (SOD1) from Pleurocordyceps sinensis (Polycephalomyces sinensis).